Consider the following 394-residue polypeptide: ATP phosphoribosyltransferase regulatory subunit (394 aa).

It belongs to the class-II aminoacyl-tRNA synthetase family. HisZ subfamily. Heteromultimer composed of HisG and HisZ subunits.

The protein localises to the cytoplasm. The protein operates within amino-acid biosynthesis; L-histidine biosynthesis; L-histidine from 5-phospho-alpha-D-ribose 1-diphosphate: step 1/9. In terms of biological role, required for the first step of histidine biosynthesis. May allow the feedback regulation of ATP phosphoribosyltransferase activity by histidine. This chain is ATP phosphoribosyltransferase regulatory subunit, found in Geobacillus thermodenitrificans (strain NG80-2).